Consider the following 173-residue polypeptide: MAIRRILTVDNAADLAVLKQVSKDVPAVDDALRGLMDDMLETMYDAPGIGLAAVQVGELVNVIVMDLAREGEEPAPRYFVNPKITWASEELFEYEEGCLSVPEVYDAVERPAKVKISYLNYQGEAVEEDAEELFAVCIQHEMDHLKGVLFIDHLSRLKRDRAISKVKKARRAA.

2 residues coordinate Fe cation: C98 and H140. E141 is an active-site residue. H144 provides a ligand contact to Fe cation.

It belongs to the polypeptide deformylase family. It depends on Fe(2+) as a cofactor.

It carries out the reaction N-terminal N-formyl-L-methionyl-[peptide] + H2O = N-terminal L-methionyl-[peptide] + formate. Its function is as follows. Removes the formyl group from the N-terminal Met of newly synthesized proteins. Requires at least a dipeptide for an efficient rate of reaction. N-terminal L-methionine is a prerequisite for activity but the enzyme has broad specificity at other positions. In Caulobacter sp. (strain K31), this protein is Peptide deformylase.